We begin with the raw amino-acid sequence, 256 residues long: 1-(5-phosphoribosyl)-5-[(5-phosphoribosylamino)methylideneamino] imidazole-4-carboxamide isomerase (256 aa).

Catalysis depends on D8, which acts as the Proton acceptor. D129 acts as the Proton donor in catalysis.

It belongs to the HisA/HisF family.

The protein resides in the cytoplasm. It carries out the reaction 1-(5-phospho-beta-D-ribosyl)-5-[(5-phospho-beta-D-ribosylamino)methylideneamino]imidazole-4-carboxamide = 5-[(5-phospho-1-deoxy-D-ribulos-1-ylimino)methylamino]-1-(5-phospho-beta-D-ribosyl)imidazole-4-carboxamide. It functions in the pathway amino-acid biosynthesis; L-histidine biosynthesis; L-histidine from 5-phospho-alpha-D-ribose 1-diphosphate: step 4/9. This is 1-(5-phosphoribosyl)-5-[(5-phosphoribosylamino)methylideneamino] imidazole-4-carboxamide isomerase from Synechococcus sp. (strain WH7803).